A 211-amino-acid chain; its full sequence is Arginine exporter protein ArgO (211 aa).

The next 6 helical transmembrane spans lie at 1–21 (MISYYFQGFALGAAMILPLGP), 37–57 (LMIALLCALSDLVLISAGIFG), 68–88 (LLALVTWGGVAFLLWYGFGAL), 111–131 (IIATMLAVTWLNPHVYLDTFV), 147–167 (WFALGTISASFLWFFGLALLA), and 179–199 (AQRIINILVGVVMWLIAFQLA).

This sequence belongs to the LysE/ArgO transporter (TC 2.A.75) family.

It is found in the cell inner membrane. It carries out the reaction L-arginine(in) = L-arginine(out). Functionally, involved in the export of arginine. Important to control the intracellular level of arginine and the correct balance between arginine and lysine. This Salmonella newport (strain SL254) protein is Arginine exporter protein ArgO.